Reading from the N-terminus, the 245-residue chain is UDP-2,3-diacylglucosamine hydrolase (245 aa).

Asp-8, His-10, Asp-41, Asn-79, and His-114 together coordinate Mn(2+). 79-80 is a substrate binding site; it reads NR. Residues Asp-122, Ser-160, Asn-164, Lys-167, and His-195 each coordinate substrate. Positions 195 and 197 each coordinate Mn(2+).

This sequence belongs to the LpxH family. Mn(2+) is required as a cofactor.

Its subcellular location is the cell inner membrane. It catalyses the reaction UDP-2-N,3-O-bis[(3R)-3-hydroxytetradecanoyl]-alpha-D-glucosamine + H2O = 2-N,3-O-bis[(3R)-3-hydroxytetradecanoyl]-alpha-D-glucosaminyl 1-phosphate + UMP + 2 H(+). Its pathway is glycolipid biosynthesis; lipid IV(A) biosynthesis; lipid IV(A) from (3R)-3-hydroxytetradecanoyl-[acyl-carrier-protein] and UDP-N-acetyl-alpha-D-glucosamine: step 4/6. Functionally, hydrolyzes the pyrophosphate bond of UDP-2,3-diacylglucosamine to yield 2,3-diacylglucosamine 1-phosphate (lipid X) and UMP by catalyzing the attack of water at the alpha-P atom. Involved in the biosynthesis of lipid A, a phosphorylated glycolipid that anchors the lipopolysaccharide to the outer membrane of the cell. In Photobacterium profundum (strain SS9), this protein is UDP-2,3-diacylglucosamine hydrolase.